A 171-amino-acid chain; its full sequence is Tubulin polymerization-promoting protein family member 2 (171 aa).

The segment at 120–171 (LTDTSKYTGTHKERFDESGKGKGIAGREDVTDNSGYVSGYKGAGTYDKKGSN) is disordered. The span at 129–149 (THKERFDESGKGKGIAGREDV) shows a compositional bias: basic and acidic residues.

Belongs to the TPPP family.

It is found in the cytoplasm. Its subcellular location is the cytosol. The protein localises to the cell projection. It localises to the cilium. The protein resides in the flagellum. Its function is as follows. Probable regulator of microtubule dynamics required for sperm motility. In contrast to other members of the family, has no microtubule bundling activity. In Bos taurus (Bovine), this protein is Tubulin polymerization-promoting protein family member 2.